A 349-amino-acid chain; its full sequence is Isopentenyl-diphosphate delta-isomerase (349 aa).

A substrate-binding site is contributed by 6-7 (RK). FMN-binding positions include 62–64 (AMT), serine 93, and asparagine 122. Glutamine 152 provides a ligand contact to substrate. Glutamate 153 contacts Mg(2+). Residues lysine 184, threonine 214, 258–259 (GG), and 280–281 (AG) contribute to the FMN site.

The protein belongs to the IPP isomerase type 2 family. As to quaternary structure, homooctamer. Dimer of tetramers. FMN is required as a cofactor. Requires NADPH as cofactor. It depends on Mg(2+) as a cofactor.

Its subcellular location is the cytoplasm. It carries out the reaction isopentenyl diphosphate = dimethylallyl diphosphate. Functionally, involved in the biosynthesis of isoprenoids. Catalyzes the 1,3-allylic rearrangement of the homoallylic substrate isopentenyl (IPP) to its allylic isomer, dimethylallyl diphosphate (DMAPP). This is Isopentenyl-diphosphate delta-isomerase from Bacillus subtilis (strain 168).